The chain runs to 383 residues: MNDVIRDFFKMESAGGILLVIAAAIAMTIANSPLGETYQSLLHTYVFGMSVSHWINDGLMAVFFLLIGLEVKRELLEGALKSKETAIFPAIAAVGGMLAPALIYVAFNANDPEAISGWAIPAATDIAFALGIMALLGKRVPVSLKVFLLALAIIDDLGVVVIIALFYTGDLSSMALLVGFVMTGVLFMLNAKEVTKLTPYMIVGAILWFAVLKSGVHATLAGVVIGFAIPLKGKQGEHSPLKHMEHALHPYVAFGILPLFAFANAGISLEGVSMSGLTSMLPLGIALGLLIGKPLGIFSFSWAAVKLGVAKLPEGINFKHIFAVSVLCGIGFTMSIFISSLAFGNVSPEFDTYARLGILMGSTTAAVLGYALLHFSLPKKAQD.

The next 11 membrane-spanning stretches (helical) occupy residues 14 to 34, 47 to 67, 87 to 107, 117 to 137, 146 to 166, 171 to 191, 205 to 225, 252 to 272, 280 to 300, 321 to 341, and 356 to 376; these read AGGILLVIAAAIAMTIANSPL, FGMSVSHWINDGLMAVFFLLI, IFPAIAAVGGMLAPALIYVAF, GWAIPAATDIAFALGIMALLG, VFLLALAIIDDLGVVVIIALF, LSSMALLVGFVMTGVLFMLNA, AILWFAVLKSGVHATLAGVVI, VAFGILPLFAFANAGISLEGV, MLPLGIALGLLIGKPLGIFSF, IFAVSVLCGIGFTMSIFISSL, and LGILMGSTTAAVLGYALLHFS.

This sequence belongs to the NhaA Na(+)/H(+) (TC 2.A.33) antiporter family.

It localises to the cell inner membrane. It carries out the reaction Na(+)(in) + 2 H(+)(out) = Na(+)(out) + 2 H(+)(in). It catalyses the reaction Li(+)(in) + 2 H(+)(out) = Li(+)(out) + 2 H(+)(in). With respect to regulation, activity is regulated by pH. Active at alkaline pH. Amiloride strongly reduces affinity for Na(+), but does not change the Vmax. Functionally, na(+)/H(+) antiporter that extrudes sodium in exchange for external protons. Can also transport lithium and potassium. This Vibrio parahaemolyticus serotype O3:K6 (strain RIMD 2210633) protein is Na(+)/H(+) antiporter NhaA.